Here is a 306-residue protein sequence, read N- to C-terminus: Phenylcoumaran benzylic ether reductase POP1 (306 aa).

NADP(+) contacts are provided by residues 9–15 (GGTGYIG), Arg34, and Lys43. Lys131 functions as the Proton acceptor in the catalytic mechanism. Arg135 is an NADP(+) binding site.

It belongs to the NmrA-type oxidoreductase family. Isoflavone reductase subfamily.

The enzyme catalyses (-)-dehydrodiconiferyl alcohol + NADPH + H(+) = (S)-isodihydrodehydrodiconiferyl alcohol + NADP(+). The catalysed reaction is (+)-dehydrodiconiferyl alcohol + NADPH + H(+) = (R)-isodihydrodehydrodiconiferyl alcohol + NADP(+). It catalyses the reaction (2R,3S)-dihydrodehydrodiconiferyl alcohol + NADPH + H(+) = (S)-tetrahydrodehydrodiconiferyl alcohol + NADP(+). It carries out the reaction (2S,3R)-dihydrodehydrodiconiferyl alcohol + NADPH + H(+) = (R)-tetrahydrodehydrodiconiferyl alcohol + NADP(+). Oxidoreductase involved in lignan biosynthesis. Catalyzes the NADPH-dependent reduction of phenylcoumaran benzylic ethers. Converts dehydrodiconiferyl alcohol (DDC) to isodihydrodehydrodiconiferyl alcohol (IDDDC), and dihydrodehydrodiconiferyl alcohol (DDDC) to tetrahydrodehydrodiconiferyl alcohol (TDDC). This Populus trichocarpa (Western balsam poplar) protein is Phenylcoumaran benzylic ether reductase POP1.